Consider the following 1472-residue polypeptide: Type IV pilus biogenesis factor PilY1 homolog PD_1611 (1472 aa).

Positions 1170, 1172, 1174, 1176, and 1178 each coordinate Ca(2+). Positions 1383 to 1397 (RGSRSSIGNSDTGAV) are enriched in polar residues. The interval 1383 to 1403 (RGSRSSIGNSDTGAVSTGGDA) is disordered.

The protein belongs to the PilY1 family.

The protein localises to the fimbrium. In terms of biological role, one of the three PilY1 homologs of X.fastidiosa, which are involved in bacterial twitching motility as component of the filamentous type IV pili (T4P). The twitching motility of this protein is enhanced by calcium, which may provide the bacterium an adaptive advantage in environments with high calcium concentrations. The protein is Type IV pilus biogenesis factor PilY1 homolog PD_1611 of Xylella fastidiosa (strain Temecula1 / ATCC 700964).